We begin with the raw amino-acid sequence, 139 residues long: Toxin FitB (139 aa).

Residues 2–123 enclose the PINc domain; that stretch reads ILLDTNVISE…HSLTVATRDT (122 aa). Positions 5 and 104 each coordinate Mg(2+).

The protein belongs to the PINc/VapC protein family. In terms of assembly, forms a heterodimer with FitA, 4 FitAB heterodimers form a complex that binds to promoter DNA. The complex is also seen in solution. This protein does not actually contact DNA. Mg(2+) serves as cofactor.

Toxic component of a type II toxin-antitoxin (TA) system. Plays a role in the speed with which bacteria traverse human epithelial cells; disruption of the locus increases the speed of trafficking about 2-4-fold. FitAB binds to its own promoter better than FitA alone. The expected nuclease activity was not observed for the FitAB complex, perhaps because FitA (the antitoxin) prevents metal binding and thus catalysis by FitB. This Neisseria gonorrhoeae (strain ATCC 700825 / FA 1090) protein is Toxin FitB (fitB).